The sequence spans 572 residues: Proline--tRNA ligase (572 aa).

This sequence belongs to the class-II aminoacyl-tRNA synthetase family. ProS type 1 subfamily. As to quaternary structure, homodimer.

Its subcellular location is the cytoplasm. The catalysed reaction is tRNA(Pro) + L-proline + ATP = L-prolyl-tRNA(Pro) + AMP + diphosphate. In terms of biological role, catalyzes the attachment of proline to tRNA(Pro) in a two-step reaction: proline is first activated by ATP to form Pro-AMP and then transferred to the acceptor end of tRNA(Pro). As ProRS can inadvertently accommodate and process non-cognate amino acids such as alanine and cysteine, to avoid such errors it has two additional distinct editing activities against alanine. One activity is designated as 'pretransfer' editing and involves the tRNA(Pro)-independent hydrolysis of activated Ala-AMP. The other activity is designated 'posttransfer' editing and involves deacylation of mischarged Ala-tRNA(Pro). The misacylated Cys-tRNA(Pro) is not edited by ProRS. The polypeptide is Proline--tRNA ligase (Escherichia coli O7:K1 (strain IAI39 / ExPEC)).